We begin with the raw amino-acid sequence, 153 residues long: MKHVHIFTDGACSGNPGPGGWGAVLRYGDVEKEMSGGEAETTNNRMELLAAISALNALRQPCEVDLHTDSKYVMDGISKWIHGWKRNGWKTGDRKPVKNGELWQALDEARNRHNVTWHWVKGHAGHPENERADELARKGMEPFKKARRADAVK.

The RNase H type-1 domain maps to 1 to 141 (MKHVHIFTDG…ADELARKGME (141 aa)). 4 residues coordinate Mg(2+): Asp-9, Glu-47, Asp-69, and Asp-133. The disordered stretch occupies residues 123 to 153 (HAGHPENERADELARKGMEPFKKARRADAVK). Residues 125–153 (GHPENERADELARKGMEPFKKARRADAVK) show a composition bias toward basic and acidic residues.

Belongs to the RNase H family. In terms of assembly, monomer. Mg(2+) is required as a cofactor.

The protein localises to the cytoplasm. It catalyses the reaction Endonucleolytic cleavage to 5'-phosphomonoester.. In terms of biological role, endonuclease that specifically degrades the RNA of RNA-DNA hybrids. The chain is Ribonuclease H from Rhizobium meliloti (strain 1021) (Ensifer meliloti).